Consider the following 297-residue polypeptide: Cell division protein FtsX (297 aa).

The Cytoplasmic segment spans residues 1-21; that stretch reads MRFGFLLNEVLTGFRRNVTMT. A helical transmembrane segment spans residues 22-42; the sequence is IAMILTTAISVGLFGGGMLVV. Over 43–171 the chain is Extracellular; that stretch reads RLADSSRAIY…LFAVLDGLSN (129 aa). The chain crosses the membrane as a helical span at residues 172 to 192; it reads AAFAVALVQAIGAILLIANMV. Residues 193-219 are Cytoplasmic-facing; sequence QVAAYTRRTEIGIMRLVGASRWYTQLP. A helical membrane pass occupies residues 220-240; that stretch reads FLVEAMLAATMGVGIAVAGLM. At 241-267 the chain is on the extracellular side; that stretch reads VVRALFLENALNQFYQANLIAKVDYAD. The helical transmembrane segment at 268–288 threads the bilayer; it reads ILFITPWLLLLGVAMSGLTAY. Over 289–297 the chain is Cytoplasmic; sequence LTLRLYVRR.

The protein belongs to the ABC-4 integral membrane protein family. FtsX subfamily. Forms a membrane-associated complex with FtsE.

The protein localises to the cell membrane. In terms of biological role, part of the ABC transporter FtsEX involved in cellular division. The sequence is that of Cell division protein FtsX from Mycobacterium tuberculosis (strain ATCC 25177 / H37Ra).